Here is a 368-residue protein sequence, read N- to C-terminus: 3-dehydroquinate synthase (368 aa).

NAD(+)-binding positions include 99-103, 123-124, K136, and K145; these read GVVGD and TT. 3 residues coordinate Zn(2+): E178, H242, and H259.

It belongs to the sugar phosphate cyclases superfamily. Dehydroquinate synthase family. Requires NAD(+) as cofactor. Co(2+) serves as cofactor. It depends on Zn(2+) as a cofactor.

It is found in the cytoplasm. The enzyme catalyses 7-phospho-2-dehydro-3-deoxy-D-arabino-heptonate = 3-dehydroquinate + phosphate. Its pathway is metabolic intermediate biosynthesis; chorismate biosynthesis; chorismate from D-erythrose 4-phosphate and phosphoenolpyruvate: step 2/7. Catalyzes the conversion of 3-deoxy-D-arabino-heptulosonate 7-phosphate (DAHP) to dehydroquinate (DHQ). This Chlorobaculum tepidum (strain ATCC 49652 / DSM 12025 / NBRC 103806 / TLS) (Chlorobium tepidum) protein is 3-dehydroquinate synthase.